Reading from the N-terminus, the 88-residue chain is Large ribosomal subunit protein bL31B (88 aa).

This sequence belongs to the bacterial ribosomal protein bL31 family. Type B subfamily. In terms of assembly, part of the 50S ribosomal subunit.

The chain is Large ribosomal subunit protein bL31B from Corynebacterium glutamicum (strain R).